The sequence spans 725 residues: Kinesin-like protein KIF2C (725 aa).

Alanine 2 carries the post-translational modification N-acetylalanine. A globular region spans residues 2 to 254 (AMDSSLQARL…CHPLTMTDPI (253 aa)). Phosphoserine is present on residues serine 6 and serine 22. Positions 89-116 (QKQKRRSVNSKIPAPKESLRSRSTRMST) are disordered. Serine 95 bears the Phosphoserine; by AURKB mark. Positions 98–101 (SKIP) match the Microtubule tip localization signal motif. A phosphoserine mark is found at serine 106, serine 109, serine 111, serine 115, serine 166, serine 175, serine 187, and serine 192. The negative regulator of microtubule-binding stretch occupies residues 207 to 238 (EKKAQNSEMRMKRAQEYDSSFPNWEFARMIKE). The Kinesin motor domain maps to 258–588 (RICVCVRKRP…LRYADRVKEL (331 aa)). ATP contacts are provided by residues arginine 264 and 348 to 355 (GQTGSGKT). The short motif at 415-418 (KKAK) is the Nuclear localization signal element. Residues serine 519, serine 621, and serine 633 each carry the phosphoserine modification. Residues 618–658 (GNLSKEEEELSSQMSSFNEAMTQIRELEEKAMEELKEIIQQ) are a coiled coil.

Belongs to the TRAFAC class myosin-kinesin ATPase superfamily. Kinesin family. MCAK/KIF2 subfamily. As to quaternary structure, interacts with CENPH. Interacts with MTUS2/TIP150; the interaction is direct. Interacts with MAPRE1; the interaction is direct, regulated by phosphorylation and is probably required for targeting to growing microtubule plus ends. Interacts with KIF18B at microtubule tips; this interaction increases the affinity of both partners for microtubule plus ends and is required for robust microtubule depolymerization. Phosphorylation by AURKA or AURKB strongly reduces KIF18B-binding. Post-translationally, phosphorylation by AURKB, regulates association with centromeres and kinetochores and the microtubule depolymerization activity. In terms of processing, ubiquitinated. As to expression, expressed at high levels in thymus and testis, at low levels in small intestine, the mucosal lining of colon, and placenta, and at very low levels in spleen and ovary; expression is not detected in prostate, peripheral blood Leukocytes, heart, brain, lung, liver, skeletal muscle, kidney or pancreas. Isoform 2 is testis-specific.

It localises to the cytoplasm. The protein localises to the cytoskeleton. Its subcellular location is the nucleus. It is found in the chromosome. The protein resides in the centromere. It localises to the kinetochore. In terms of biological role, in complex with KIF18B, constitutes the major microtubule plus-end depolymerizing activity in mitotic cells. Regulates the turnover of microtubules at the kinetochore and functions in chromosome segregation during mitosis. Plays a role in chromosome congression and is required for the lateral to end-on conversion of the chromosome-microtubule attachment. The sequence is that of Kinesin-like protein KIF2C (KIF2C) from Homo sapiens (Human).